Here is a 681-residue protein sequence, read N- to C-terminus: MASTLAPITSTLAAVTASAPPKYDNLWMLILGFIIAFVLAFSVGANDVANSFGTAVGSGVVTLKQACILASIFETVGSALLGAKVSETIRKGLIDVEKYNATQDLLMAGSVSAMFGSAVWQLVASFLKLPISGTHCIVGATIGFSLVAKGQEGIKWSELIKIVMSWFVSPLLSGIMSGILFFLVRAFILRKADPVPNGLRALPIFYACTIGINLFSIMYTGAPLLGFDKLPLWGTILISVGCAVFCALIVWFFVCPRMKRKIEREVKSSPSESPLMEKKNNLKDHEETKMAPGDVENRNPVSEVVCATGPLRAVVEERTVSFKLGDLEEAPERERLPMDLKEETNIDGTINGAVQLPNGNLVQFSQTVSNQINSSGHYQYHTVHKDSGLYKELLHKLHLAKVGDCMGDSGDKPLRRNNSYTSYTMAICGMPLDSFRAKEGEQKGDEMETLTWPNADTKKRIRMDSYTSYCNAVSDLHSESEMDMSVKAEMGLGDRKGSSGSLEEWYDQDKPEVSLLFQFLQILTACFGSFAHGGNDVSNAIGPLVALYLVYETRDVTTKEATPIWLLLYGGVGICMGLWVWGRRVIQTMGKDLTPITPSSGFSIELASAFTVVVASNIGLPISTTHCKVGSVVSVGWLRSKKAVDWRLFRNIFMAWFVTVPISGVISAAIMAVFKHIILPV.

6 consecutive transmembrane segments (helical) span residues 25-45 (NLWMLILGFIIAFVLAFSVGA), 66-86 (ACILASIFETVGSALLGAKVS), 106-126 (LMAGSVSAMFGSAVWQLVASF), 162-182 (IVMSWFVSPLLSGIMSGILFF), 201-221 (ALPIFYACTIGINLFSIMYTG), and 234-254 (GTILISVGCAVFCALIVWFFV). The interval 266 to 295 (VKSSPSESPLMEKKNNLKDHEETKMAPGDV) is disordered. S269 and S273 each carry phosphoserine. Residues 275 to 289 (LMEKKNNLKDHEETK) are compositionally biased toward basic and acidic residues. Helical transmembrane passes span 513–533 (VSLLFQFLQILTACFGSFAHG), 561–581 (ATPIWLLLYGGVGICMGLWVW), 602–622 (FSIELASAFTVVVASNIGLPI), and 652–672 (IFMAWFVTVPISGVISAAIMA).

It belongs to the inorganic phosphate transporter (PiT) (TC 2.A.20) family. Ubiquitously expressed.

The protein resides in the cell membrane. It carries out the reaction 2 Na(+)(out) + phosphate(out) = 2 Na(+)(in) + phosphate(in). Its function is as follows. Sodium-phosphate symporter which preferentially transports the monovalent form of phosphate with a stoichiometry of two sodium ions per phosphate ion. May play a role in extracellular matrix and cartilage calcification as well as in vascular calcification. Essential for cell proliferation but this function is independent of its phosphate transporter activity. The polypeptide is Sodium-dependent phosphate transporter 1 (Slc20a1) (Rattus norvegicus (Rat)).